A 525-amino-acid chain; its full sequence is GMP synthase [glutamine-hydrolyzing] (525 aa).

A Glutamine amidotransferase type-1 domain is found at 3 to 200; that stretch reads KILILDFGSQ…VLHVAGCKPS (198 aa). Catalysis depends on Cys-79, which acts as the Nucleophile. Catalysis depends on residues His-174 and Glu-176. Residues 201-393 enclose the GMPS ATP-PPase domain; that stretch reads WTMPNYIDEA…LGLPHDMVYR (193 aa). Residue 228 to 234 coordinates ATP; that stretch reads SGGVDSS.

Homodimer.

It carries out the reaction XMP + L-glutamine + ATP + H2O = GMP + L-glutamate + AMP + diphosphate + 2 H(+). Its pathway is purine metabolism; GMP biosynthesis; GMP from XMP (L-Gln route): step 1/1. Functionally, catalyzes the synthesis of GMP from XMP. The chain is GMP synthase [glutamine-hydrolyzing] from Chromobacterium violaceum (strain ATCC 12472 / DSM 30191 / JCM 1249 / CCUG 213 / NBRC 12614 / NCIMB 9131 / NCTC 9757 / MK).